The sequence spans 176 residues: Protein MAL2 (176 aa).

The Cytoplasmic segment spans residues 1–34; it reads MSAGGASVPPPPNPAVSFPPPRVTLPAGPDILRT. The 145-residue stretch at 31-175 folds into the MARVEL domain; that stretch reads ILRTYSGAFV…SLGLALRRWR (145 aa). A helical membrane pass occupies residues 35 to 55; it reads YSGAFVCLEILFGGLVWILVA. Residues 56–66 are Lumenal-facing; it reads SSNVPLPLLQG. The chain crosses the membrane as a helical span at residues 67–87; the sequence is WVMFVSVTAFFFSLLFLGMFL. Residues 88–102 are Cytoplasmic-facing; that stretch reads SGMVAQIDANWNFLD. A helical transmembrane segment spans residues 103–123; it reads FAYHFTVFVFYFGAFLLEAAA. Topologically, residues 124-149 are lumenal; sequence TSLHDLHCNTTITGQPLLSDNQYNIN. N-linked (GlcNAc...) asparagine glycosylation is present at Asn132. The chain crosses the membrane as a helical span at residues 150–170; sequence VAASIFAFMTTACYGCSLGLA. The Cytoplasmic segment spans residues 171 to 176; the sequence is LRRWRP.

It belongs to the MAL family. Interacts with TPD52L2. As to expression, predominantly expressed in kidney, lung, and liver. Also found in thyroid gland, stomach and, at lower levels in testis and small intestine.

The protein resides in the cell membrane. It is found in the apical cell membrane. The protein localises to the endomembrane system. Its subcellular location is the cytoplasm. It localises to the perinuclear region. Member of the machinery of polarized transport. Required for the indirect transcytotic route at the step of the egress of the transcytosing cargo from perinuclear endosomes in order for it to travel to the apical surface via a raft-dependent pathway. This chain is Protein MAL2 (MAL2), found in Homo sapiens (Human).